The primary structure comprises 323 residues: MAALIAENFRFLSLFFKSKDVMIFNGLVALGTVGSQELFSVVAFHCPCSPARNYLYGLAAIGVPALVLFIIGIILNNHTWNLVAECQHRRTKNCSAAPTFLLLSSILGRAAVAPVTWSVISLLRGEAYVCALSEFVDPSSLTAREEHFPSAHATEILARFPCKENPDNLSDFREEVSRRLRYESQLFGWLLIGVVAILVFLTKCLKHYCSPLSYRQEAYWAQYRANEDQLFQRTAEVHSRVLAANNVRRFFGFVALNKDDEELIANFPVEGTQPRPQWNAITGVYLYRENQGLPLYSRLHKWAQGLAGNGAAPDNVEMALLPS.

Topologically, residues 1-21 (MAALIAENFRFLSLFFKSKDV) are cytoplasmic. Residues 14 to 39 (LFFKSKDVMIFNGLVALGTVGSQELF) are central pore. A helical membrane pass occupies residues 22–43 (MIFNGLVALGTVGSQELFSVVA). The Extracellular segment spans residues 44–52 (FHCPCSPAR). 2 disulfides stabilise this stretch: C46–C130 and C48–C162. A helical membrane pass occupies residues 53-76 (NYLYGLAAIGVPALVLFIIGIILN). At 77–101 (NHTWNLVAECQHRRTKNCSAAPTFL) the chain is on the cytoplasmic side. The chain crosses the membrane as a helical span at residues 102–132 (LLSSILGRAAVAPVTWSVISLLRGEAYVCAL). Residues 133–179 (SEFVDPSSLTAREEHFPSAHATEILARFPCKENPDNLSDFREEVSRR) lie on the Extracellular side of the membrane. A hemichannel docking region spans residues 145 to 152 (EEHFPSAH). Residues 180-206 (LRYESQLFGWLLIGVVAILVFLTKCLK) traverse the membrane as a helical segment. At 207 to 323 (HYCSPLSYRQ…DNVEMALLPS (117 aa)) the chain is on the cytoplasmic side. The intersubunit interaction stretch occupies residues 214 to 251 (YRQEAYWAQYRANEDQLFQRTAEVHSRVLAANNVRRFF).

Belongs to the CALHM family. Homo-undecamer. Two undecameric hemichannels can assemble in a head-to-head manner to form a gap junction. In terms of tissue distribution, placenta.

The protein resides in the cell membrane. It catalyses the reaction ATP(in) = ATP(out). Inhibited by Ca(2+) and ruthenium red in a voltage-dependent way. Functionally, pore-forming subunit of Ca(2+) homeostasis modulator channels. Mediates ATP release from astrocytes and ATP-induced Ca(2+) influx in microglia thus regulating neuronal ATP and Ca(2+) homeostasis, synaptic transmission and neuroinflammatory response. May form intercellular gap junctions. The gating mechanism remains unknown. The sequence is that of Calcium homeostasis modulator protein 2 from Homo sapiens (Human).